A 571-amino-acid polypeptide reads, in one-letter code: 2-succinyl-5-enolpyruvyl-6-hydroxy-3-cyclohexene-1-carboxylate synthase (571 aa).

The protein belongs to the TPP enzyme family. MenD subfamily. In terms of assembly, homodimer. Mg(2+) serves as cofactor. The cofactor is Mn(2+). Thiamine diphosphate is required as a cofactor.

The catalysed reaction is isochorismate + 2-oxoglutarate + H(+) = 5-enolpyruvoyl-6-hydroxy-2-succinyl-cyclohex-3-ene-1-carboxylate + CO2. It functions in the pathway quinol/quinone metabolism; 1,4-dihydroxy-2-naphthoate biosynthesis; 1,4-dihydroxy-2-naphthoate from chorismate: step 2/7. The protein operates within quinol/quinone metabolism; menaquinone biosynthesis. In terms of biological role, catalyzes the thiamine diphosphate-dependent decarboxylation of 2-oxoglutarate and the subsequent addition of the resulting succinic semialdehyde-thiamine pyrophosphate anion to isochorismate to yield 2-succinyl-5-enolpyruvyl-6-hydroxy-3-cyclohexene-1-carboxylate (SEPHCHC). This Vibrio parahaemolyticus serotype O3:K6 (strain RIMD 2210633) protein is 2-succinyl-5-enolpyruvyl-6-hydroxy-3-cyclohexene-1-carboxylate synthase.